Consider the following 343-residue polypeptide: 3-isopropylmalate dehydrogenase (343 aa).

The substrate site is built by Arg-94, Arg-104, Arg-128, and Asp-218. Mg(2+) is bound by residues Asp-218, Asp-242, and Asp-246. Position 278 to 290 (Gly-278 to Asn-290) interacts with NAD(+).

The protein belongs to the isocitrate and isopropylmalate dehydrogenases family. LeuB type 2 subfamily. As to quaternary structure, homodimer. Mg(2+) is required as a cofactor. Mn(2+) serves as cofactor.

The protein localises to the cytoplasm. It catalyses the reaction (2R,3S)-3-isopropylmalate + NAD(+) = 4-methyl-2-oxopentanoate + CO2 + NADH. Its pathway is amino-acid biosynthesis; L-leucine biosynthesis; L-leucine from 3-methyl-2-oxobutanoate: step 3/4. Functionally, catalyzes the oxidation of 3-carboxy-2-hydroxy-4-methylpentanoate (3-isopropylmalate) to 3-carboxy-4-methyl-2-oxopentanoate. The product decarboxylates to 4-methyl-2 oxopentanoate. This chain is 3-isopropylmalate dehydrogenase, found in Bifidobacterium longum (strain DJO10A).